The chain runs to 173 residues: Inorganic pyrophosphatase (173 aa).

Substrate contacts are provided by lysine 26, arginine 40, and tyrosine 52. Mg(2+) is bound by residues aspartate 62, aspartate 67, and aspartate 99. Position 138 (tyrosine 138) interacts with substrate.

Belongs to the PPase family. Homohexamer. Requires Mg(2+) as cofactor.

Its subcellular location is the cytoplasm. The catalysed reaction is diphosphate + H2O = 2 phosphate + H(+). Catalyzes the hydrolysis of inorganic pyrophosphate (PPi) forming two phosphate ions. This is Inorganic pyrophosphatase from Sulfolobus acidocaldarius (strain ATCC 33909 / DSM 639 / JCM 8929 / NBRC 15157 / NCIMB 11770).